Reading from the N-terminus, the 1271-residue chain is SR-related and CTD-associated factor 8 (1271 aa).

The CID domain maps to 1–139 (MEAVKTFNSE…PLLDMAAGIP (139 aa)). Phosphothreonine is present on Thr-6. Residue Lys-18 forms a Glycyl lysine isopeptide (Lys-Gly) (interchain with G-Cter in SUMO1) linkage. Basic and acidic residues predominate over residues 270–283 (GEDSEHSEEPKKEI). Disordered regions lie at residues 270–289 (GEDSEHSEEPKKEIPASQLS), 322–354 (QQQPQKATPQDSQEGTFGSEHSASPSQGSSQQH), and 384–468 (EEVF…PPIR). Ser-273 is subject to Phosphoserine. The segment covering 327 to 354 (KATPQDSQEGTFGSEHSASPSQGSSQQH) has biased composition (polar residues). Residues 394-443 (VAVRSRSRTHSRSRSRSPRKRRSRSRSGSRKRKHRKRSRSRSRERKRKSS) show a composition bias toward basic residues. Positions 447–461 (SSERRAREREKERQK) are enriched in basic and acidic residues. One can recognise an RRM domain in the interval 477 to 551 (TTLWVGQVDK…KVIKIAWALN (75 aa)). Thr-615 carries the phosphothreonine modification. Phosphoserine occurs at positions 617 and 779. A disordered region spans residues 899 to 918 (TQPPAGPQNLPPLSIPNQRM). A compositionally biased stretch (pro residues) spans 902 to 912 (PAGPQNLPPLS). Arg-917, Arg-927, and Arg-938 each carry asymmetric dimethylarginine. Pro residues-rich tracts occupy residues 945 to 956 (GIPPQRGIPPPS) and 963 to 972 (HPPPRGPFPP). Positions 945 to 1064 (GIPPQRGIPP…DGRDHFGRPP (120 aa)) are disordered. 2 stretches are compositionally biased toward basic and acidic residues: residues 1011-1027 (EGDRDYRFPPIETRESI) and 1034-1064 (DVRDVVGRPIDPREGPGRPPLDGRDHFGRPP). Arg-1073 carries the asymmetric dimethylarginine modification. Residues 1198–1271 (YFEGATSQRK…VVESTETEGT (74 aa)) are disordered. A compositionally biased stretch (acidic residues) spans 1255–1271 (ADIESEPVVESTETEGT).

As to quaternary structure, interacts with POLR2A; via C-terminal heptapeptide repeat domain (CTD) phosphorylated at 'Ser-2' and 'Ser-5'. Identified in a complex with CDC5L and other spliceosomal proteins.

The protein localises to the nucleus. Its subcellular location is the nucleus matrix. Anti-terminator protein required to prevent early mRNA termination during transcription. Together with SCAF4, acts by suppressing the use of early, alternative poly(A) sites, thereby preventing the accumulation of non-functional truncated proteins. Mechanistically, associates with the phosphorylated C-terminal heptapeptide repeat domain (CTD) of the largest RNA polymerase II subunit (POLR2A), and subsequently binds nascent RNA upstream of early polyadenylation sites to prevent premature mRNA transcript cleavage and polyadenylation. Independently of SCAF4, also acts as a positive regulator of transcript elongation. This is SR-related and CTD-associated factor 8 from Homo sapiens (Human).